A 469-amino-acid polypeptide reads, in one-letter code: Programmed cell death protein 4 (469 aa).

N-acetylmethionine is present on methionine 1. Disordered regions lie at residues 1-38 (MDVE…EIKN) and 58-128 (KAKR…GTPG). Position 25 is a phosphoserine (serine 25). The Nuclear localization signal motif lies at 58-64 (KAKRRLR). Serine 67 carries the phosphoserine; by PKB and RPS6KB1 modification. 6 positions are modified to phosphoserine: serine 68, serine 71, serine 76, serine 78, serine 80, and serine 94. Residues 70–76 (DSGRGDS) carry the Phosphodegron motif. Over residues 74–83 (GDSVSDSGSD) the composition is skewed to low complexity. Residues 114-125 (KKGGAGGKGVWG) show a composition bias toward gly residues. The residue at position 152 (tyrosine 152) is a Phosphotyrosine. In terms of domain architecture, MI 1 spans 163 to 284 (AFEKTLTPII…CNTYIDSYKG (122 aa)). The Nuclear localization signal motif lies at 241 to 250 (DKLLKDLPEL). Phosphoserine is present on residues serine 313 and serine 317. Residues 326–449 (HLVKEIDMLL…SKQLRDLCPS (124 aa)) form the MI 2 domain. Serine 457 is subject to Phosphoserine; by PKB.

It belongs to the PDCD4 family. As to quaternary structure, interacts (via MI domains) with EIF4A2. Interacts (via MI domains) with EIF4A1 (via N-terminal domain). Heterotrimer with EIF4A1; one molecule of PDCD4 binds two molecules of EIF4A1. Interacts with EIF4G1. May form a complex with EIF4A1 and EIF4G1. The interaction between PDCD4 and EIF4A1 interferes with the interaction between EIF4A1 and EIF4G. When phosphorylated, interacts with BTRC and FBXW11. Post-translationally, polyubiquitinated, leading to its proteasomal degradation. Rapidly degraded in response to mitogens. Phosphorylation of the phosphodegron promotes interaction with BTRC and proteasomal degradation. Phosphorylated at Ser-67 by RPS6KB1 in response to mitogens; phosphorylation promotes proteasomal degradation of PDCD4. As to expression, up-regulated in proliferative cells. Highly expressed in epithelial cells of the mammary gland. Reduced expression in lung cancer and colon carcinoma.

The protein resides in the nucleus. It is found in the cytoplasm. Its function is as follows. Inhibits translation initiation and cap-dependent translation. May excert its function by hindering the interaction between EIF4A1 and EIF4G. Inhibits the helicase activity of EIF4A. Modulates the activation of JUN kinase. Down-regulates the expression of MAP4K1, thus inhibiting events important in driving invasion, namely, MAPK85 activation and consequent JUN-dependent transcription. May play a role in apoptosis. Tumor suppressor. Inhibits tumor promoter-induced neoplastic transformation. Binds RNA. This Homo sapiens (Human) protein is Programmed cell death protein 4 (PDCD4).